A 205-amino-acid polypeptide reads, in one-letter code: Methylamine utilization protein MauD (205 aa).

The chain crosses the membrane as a helical span at residues 5–25; sequence FLIASNVLLWLALIGCAVLML. One can recognise a Thioredoxin domain in the interval 50–184; sequence PDVGDAAPTF…LESLLEADKS (135 aa).

Its subcellular location is the membrane. Its pathway is one-carbon metabolism; methylamine degradation. In terms of biological role, may be specifically involved in the processing, transport, and/or maturation of the MADH beta-subunit. This Methylorubrum extorquens (strain ATCC 14718 / DSM 1338 / JCM 2805 / NCIMB 9133 / AM1) (Methylobacterium extorquens) protein is Methylamine utilization protein MauD (mauD).